Here is a 378-residue protein sequence, read N- to C-terminus: MTDPPALSALTTMRVGGTPERLLEPADRDALVATAREVWSTGDEWLLLGGGSNTIAADDGFEGTVLRIVTRGVERLAAEKGRIRLRVQAGEPWDALVALTVRNGWAGIEALSGIPGSTGAAPVQNIGAYGQEIESALIGVEFLDYLTGEVYTLARAELGLGYRTSALKRGMAGVVLSVDLELADHSVPGGVGASLSAPIAYAQLADALAVPLGSRVSVDELRRAVLALRASKGMVLDPADPDSVSAGSFFTNPIVSENVARALPSDAPRWSLGPPEPDTILSLGPEGVHPLDVPPFAAGPYEAKLSAAWLIENAGIRSGFALPGSGAAISSKHTLAIVNRGAATAADVAQLASFVRGRVQADFGVVLHPEPVLVGLTL.

One can recognise an FAD-binding PCMH-type domain in the interval 15–185 (VGGTPERLLE…LSVDLELADH (171 aa)). R163 is an active-site residue. The active-site Proton donor is S248. E370 is a catalytic residue.

Belongs to the MurB family. FAD serves as cofactor.

It is found in the cytoplasm. The catalysed reaction is UDP-N-acetyl-alpha-D-muramate + NADP(+) = UDP-N-acetyl-3-O-(1-carboxyvinyl)-alpha-D-glucosamine + NADPH + H(+). It participates in cell wall biogenesis; peptidoglycan biosynthesis. Its function is as follows. Cell wall formation. The sequence is that of UDP-N-acetylenolpyruvoylglucosamine reductase from Leifsonia xyli subsp. xyli (strain CTCB07).